Reading from the N-terminus, the 620-residue chain is MQPHLSHQPCWSLPSPSVREAASMYGTAVAIFLVILVAALQGSEPPESPFPYHIPLDPEGTLELSWNVSYDQEIIHFQLQVQGPRAGVLFGMSDRGEMENADLVMLWTDGDRTYFADAWSDQKGQIHLDTHQDYQLLQAQRVSNSLSLLFKRPFVTCDPKDYVIEDDTVHLVYGILEEPFQSLEAINTSGLHTGLQQVQLLKPEVSTPAMPADVQTMDIRAPDVLIPSTETTYWCYITELPLHFPRHHIIMYEAIVTEGNEALVHHMEVFQCTNESEAFPMFNGPCDSKMKPDRLNYCRHVLAAWALGAKAFYYPEEAGVPLGSSGSSRFLRLEVHYHNPRNIQGRRDSSGIRLHYTASLRPNEAGIMELGLVYTPLMAIPPQETTFVLTGYCTDRCTQMALPKSGIRIFASQLHTHLTGRKVITVLARDGQQREVVNRDNHYSPHFQEIRMLKNAVTVHQGDVLITSCTYNTENRTMATVGGFGILEEMCVNYVHYYPKTELELCKSAVDDGFLQKYFHIVNRFGNEEVCTCPQASVPQQFASVPWNSFNRDMLKALYNYAPISVHCNKTSAVRFPGNWNLQPLPNITSAVEEPDPRCPIRQTRGPAGPFVVITHGGRH.

Residues 1–19 lie on the Cytoplasmic side of the membrane; sequence MQPHLSHQPCWSLPSPSVR. A helical; Signal-anchor for type II membrane protein transmembrane segment spans residues 20–40; it reads EAASMYGTAVAIFLVILVAAL. Over 41–620 the chain is Intragranular; that stretch reads QGSEPPESPF…FVVITHGGRH (580 aa). Positions 60 to 176 constitute a DOMON domain; it reads GTLELSWNVS…DTVHLVYGIL (117 aa). N-linked (GlcNAc...) asparagine glycans are attached at residues Asn-67 and Asn-187. 6 disulfides stabilise this stretch: Cys-157-Cys-599, Cys-235-Cys-286, Cys-272-Cys-298, Cys-393-Cys-506, Cys-397-Cys-568, and Cys-469-Cys-491. Residue Tyr-233 is part of the active site. Residues His-265 and His-266 each coordinate Cu(2+). A glycan (N-linked (GlcNAc...) asparagine) is linked at Asn-274. His-336 serves as a coordination point for Cu(2+). Ser-349 carries the phosphoserine; by CaMK modification. His-415 is an active-site residue. His-415 and His-417 together coordinate Cu(2+). The N-linked (GlcNAc...) asparagine glycan is linked to Asn-475. Met-490 contacts Cu(2+). N-linked (GlcNAc...) asparagine glycosylation is found at Asn-569 and Asn-587.

Belongs to the copper type II ascorbate-dependent monooxygenase family. In terms of assembly, homotetramer; composed of two disulfide-linked dimers. Requires Cu(2+) as cofactor. Post-translationally, proteolytic cleavage after the membrane-anchor leads to the release of the soluble form. N-glycosylated. As to expression, chromaffin granules of the adrenal medulla and synaptic vesicles of the sympathetic nervous system.

The protein resides in the cytoplasmic vesicle. It is found in the secretory vesicle lumen. The protein localises to the secretory vesicle. Its subcellular location is the chromaffin granule lumen. It localises to the secreted. The protein resides in the secretory vesicle membrane. It is found in the chromaffin granule membrane. It carries out the reaction dopamine + 2 L-ascorbate + O2 = (R)-noradrenaline + 2 monodehydro-L-ascorbate radical + H2O. The protein operates within catecholamine biosynthesis; (R)-noradrenaline biosynthesis; (R)-noradrenaline from dopamine: step 1/1. Functionally, catalyzes the hydroxylation of dopamine to noradrenaline (also known as norepinephrine), and is thus vital for regulation of these neurotransmitters. This is Dopamine beta-hydroxylase (Dbh) from Rattus norvegicus (Rat).